The primary structure comprises 449 residues: Exopolygalacturonase X-2 (449 aa).

The signal sequence occupies residues 1 to 24; sequence MGFKRTIGLLLGILLALDQVSVLA. N-linked (GlcNAc...) asparagine glycosylation is found at asparagine 136, asparagine 172, and asparagine 208. The PbH1 1 repeat unit spans residues 240-261; it reads SDNVVIQNSVINHDDDCVSFKP. The active-site Proton donor is aspartate 254. Cysteine 256 and cysteine 273 are disulfide-bonded. Asparagine 262 and asparagine 274 each carry an N-linked (GlcNAc...) asparagine glycan. 2 PbH1 repeats span residues 263–283 and 294–315; these read STNIIVQGLHCNGSHGISVGS and VSDLYIYNNTMANTTTAARLKV. Histidine 277 is a catalytic residue. 4 N-linked (GlcNAc...) asparagine glycosylation sites follow: asparagine 301, asparagine 306, asparagine 340, and asparagine 365. An intrachain disulfide couples cysteine 403 to cysteine 409. Residues asparagine 416 and asparagine 421 are each glycosylated (N-linked (GlcNAc...) asparagine).

The protein belongs to the glycosyl hydrolase 28 family.

The protein resides in the secreted. It carries out the reaction [(1-&gt;4)-alpha-D-galacturonosyl](n) + H2O = alpha-D-galacturonate + [(1-&gt;4)-alpha-D-galacturonosyl](n-1). In terms of biological role, specific in hydrolyzing the terminal glycosidic bond of polygalacturonic acid and oligogalacturonates. This Emericella nidulans (strain FGSC A4 / ATCC 38163 / CBS 112.46 / NRRL 194 / M139) (Aspergillus nidulans) protein is Exopolygalacturonase X-2 (pgaX-2).